A 223-amino-acid polypeptide reads, in one-letter code: Probable iron-sulfur cluster repair protein HI_1677 (223 aa).

The protein belongs to the RIC family.

It is found in the cytoplasm. Functionally, di-iron-containing protein involved in the repair of iron-sulfur clusters. The protein is Probable iron-sulfur cluster repair protein HI_1677 of Haemophilus influenzae (strain ATCC 51907 / DSM 11121 / KW20 / Rd).